The chain runs to 481 residues: UDP-glycosyltransferase 71K2 (481 aa).

UDP-alpha-D-glucose is bound by residues Ser285, 350–351, 368–376, and 390–393; these read WA, HCGWNSILE, and YAEQ.

Belongs to the UDP-glycosyltransferase family.

In terms of biological role, glycosyltransferase that possesses chalcone and flavonol 2'-O-glycosyltransferase activity. Converts phloretin to phlorizin (phloretin 2'-O-glucoside), a potent antioxidant. Possesses glycosyltransferase activity toward quercetin, isoliquiritigenin, butein and caffeic acid. In Pyrus communis (Pear), this protein is UDP-glycosyltransferase 71K2.